Consider the following 318-residue polypeptide: tRNA uridine(34) hydroxylase (318 aa).

One can recognise a Rhodanese domain in the interval 123-217 (EDDDTVIIDA…YGKDPETKSE (95 aa)). C177 functions as the Cysteine persulfide intermediate in the catalytic mechanism.

It belongs to the TrhO family.

It catalyses the reaction uridine(34) in tRNA + AH2 + O2 = 5-hydroxyuridine(34) in tRNA + A + H2O. Its function is as follows. Catalyzes oxygen-dependent 5-hydroxyuridine (ho5U) modification at position 34 in tRNAs. The chain is tRNA uridine(34) hydroxylase from Staphylococcus aureus (strain COL).